The following is a 271-amino-acid chain: Virulence regulon transcriptional activator VirF (271 aa).

An HTH araC/xylS-type domain is found at 167 to 265 (ERLQKFMEEN…GCTPSQARLT (99 aa)). 2 consecutive DNA-binding regions (H-T-H motif) follow at residues 184–205 (SKFA…GTVY) and 232–255 (IVDI…RRRF).

Transcriptional activator of the Yersinia virulence regulon. This chain is Virulence regulon transcriptional activator VirF (virF), found in Yersinia enterocolitica.